We begin with the raw amino-acid sequence, 411 residues long: Putative polysaccharide ligase RC0486 (411 aa).

10 helical membrane-spanning segments follow: residues 15–35 (LGMLAGLSAAATVTIFLLISF), 78–98 (GITMLFTAWCFISCLFAIHLI), 101–121 (LATFTQVFILLFLGFAVSNSA), 133–153 (LIFGILTAILLFFIEYSSNGF), 166–186 (MLDRGCALLSITAWVAIIILL), 207–227 (ISDSLASFLGFGIGGVIFILT), 233–253 (IFFKLIAISLITGSLLFPVIA), 328–348 (ILQITLELGIIGLILFLCLVY), 361–381 (NFKAISYACFINYYIIGMISY), and 383–403 (IWQIWWISSGIWVLVLMKLLV).

Belongs to the O-antigen ligase family.

It localises to the membrane. This is Putative polysaccharide ligase RC0486 from Rickettsia conorii (strain ATCC VR-613 / Malish 7).